We begin with the raw amino-acid sequence, 70 residues long: Guanine nucleotide-binding protein G(I)/G(S)/G(O) subunit gamma-8 (70 aa).

Cys-67 carries the post-translational modification Cysteine methyl ester. The S-geranylgeranyl cysteine moiety is linked to residue Cys-67. Residues 68–70 (TLL) constitute a propeptide, removed in mature form.

Belongs to the G protein gamma family. As to quaternary structure, g proteins are composed of 3 units, alpha, beta and gamma. Detected in the olfactory epithelium, the vomeronasal epithelium and, to a lesser extent, the olfactory bulb.

The protein resides in the cell membrane. Functionally, guanine nucleotide-binding proteins (G proteins) are involved as a modulator or transducer in various transmembrane signaling systems. The beta and gamma chains are required for the GTPase activity, for replacement of GDP by GTP, and for G protein-effector interaction. This subunit may have a very specific role in the development and turnover of olfactory and vomeronasal neurons. The polypeptide is Guanine nucleotide-binding protein G(I)/G(S)/G(O) subunit gamma-8 (Gng8) (Rattus norvegicus (Rat)).